The primary structure comprises 139 residues: Probable disulfide formation protein C (139 aa).

Residues 8–27 (EYALLTAWGASFIATLGSLY) traverse the membrane as a helical segment. C37 and C40 form a disulfide bridge. 2 helical membrane-spanning segments follow: residues 42-61 (YQRIFMYPFVLWLGIAVAKK) and 68-85 (YSLPIASIGACISLYHYA). C99 and C104 are oxidised to a cystine. The chain crosses the membrane as a helical span at residues 113 to 135 (GFVTIPFLALIGFITIAVCSFIV).

Belongs to the DsbB family. BdbC subfamily.

Its subcellular location is the cell membrane. In terms of biological role, required for disulfide bond formation in some proteins. In Bacillus cereus (strain ATCC 14579 / DSM 31 / CCUG 7414 / JCM 2152 / NBRC 15305 / NCIMB 9373 / NCTC 2599 / NRRL B-3711), this protein is Probable disulfide formation protein C.